A 264-amino-acid chain; its full sequence is Thiazole synthase (264 aa).

Residue lysine 98 is the Schiff-base intermediate with DXP of the active site. 1-deoxy-D-xylulose 5-phosphate contacts are provided by residues glycine 159, 185-186 (AG), and 207-208 (AS).

This sequence belongs to the ThiG family. In terms of assembly, homotetramer. Forms heterodimers with either ThiH or ThiS.

The protein resides in the cytoplasm. The enzyme catalyses [ThiS sulfur-carrier protein]-C-terminal-Gly-aminoethanethioate + 2-iminoacetate + 1-deoxy-D-xylulose 5-phosphate = [ThiS sulfur-carrier protein]-C-terminal Gly-Gly + 2-[(2R,5Z)-2-carboxy-4-methylthiazol-5(2H)-ylidene]ethyl phosphate + 2 H2O + H(+). The protein operates within cofactor biosynthesis; thiamine diphosphate biosynthesis. Catalyzes the rearrangement of 1-deoxy-D-xylulose 5-phosphate (DXP) to produce the thiazole phosphate moiety of thiamine. Sulfur is provided by the thiocarboxylate moiety of the carrier protein ThiS. In vitro, sulfur can be provided by H(2)S. This is Thiazole synthase from Streptomyces griseus subsp. griseus (strain JCM 4626 / CBS 651.72 / NBRC 13350 / KCC S-0626 / ISP 5235).